A 240-amino-acid polypeptide reads, in one-letter code: Putative protein FAM10A4 (240 aa).

A disordered region spans residues 38 to 94 (MGGTATQKAKSEENTKEEKPDSKVEEDLKADEPSSEESDLEIDKEGVIEPDTDAPQE). Residues 46–69 (AKSEENTKEEKPDSKVEEDLKADE) are compositionally biased toward basic and acidic residues. Residues 85–94 (IEPDTDAPQE) show a composition bias toward acidic residues. TPR repeat units lie at residues 110 to 143 (ANDK…NPRL), 145 to 177 (ILYA…NPDS), and 179 to 211 (QPYK…DYDE). The disordered stretch occupies residues 220–240 (VQPRAQKIAEHQRKYERKREE). The span at 226–240 (KIAEHQRKYERKREE) shows a compositional bias: basic and acidic residues.

Belongs to the FAM10 family. As to expression, highly expressed in bone marrow and weakly in placenta, pancreas, heart and HeLa cell line.

The protein resides in the cytoplasm. The chain is Putative protein FAM10A4 (ST13P4) from Homo sapiens (Human).